The sequence spans 759 residues: ARF GTPase-activating protein GIT2 (759 aa).

Residues 1–124 (MSKRLRSNDV…AFVHRLPCRD (124 aa)) form the Arf-GAP domain. The C4-type zinc finger occupies 11-34 (CADCSGPDPSWASVNRGTLICDEC). ANK repeat units follow at residues 132 to 161 (DLSKQLHSSVRTGNLETCLRLLSLGAQANF), 166 to 198 (KGSTPLHVASKAGQILQAELLAVYGADPGTHDS), and 199 to 228 (SGKTPVDYARQGGHRELAERLVEIQYELTD). Disordered regions lie at residues 376–422 (VSNQ…DLSD) and 469–641 (QSEN…PSTE). A compositionally biased stretch (acidic residues) spans 385-402 (QDNDQPDYDSVASDEDTD). Residues 451-478 (NNNLSGELRIMQKKLQTLQSENSSLRRQ) are a coiled coil. A compositionally biased stretch (polar residues) spans 469-489 (QSENSSLRRQATASACQVQTA). Positions 555–569 (TSSSSLPSFPSTLSW) are enriched in low complexity. Residues 570 to 583 (SRDESTRRASRLEK) are compositionally biased toward basic and acidic residues.

In terms of assembly, may form heterooligomers with GIT1. Directly interacts with protein Piccolo/PCLO. Interacts with PPFIA1 and PPFIA2. Interacts with ARHGEF7. Identified in a complex with ARHGEF6 and BIN2. Interacts with PAK3. Interacts with PXN/paxillin. Interacts with TGFB1I1. Forms a complex with EFNB1 and GRB4/NCK2.

Functionally, GTPase-activating protein for ADP ribosylation factor family members, including ARF1. In Rattus norvegicus (Rat), this protein is ARF GTPase-activating protein GIT2 (Git2).